A 551-amino-acid polypeptide reads, in one-letter code: Cilia- and flagella-associated protein 45 (551 aa).

Disordered regions lie at residues 1-52, 232-256, and 385-415; these read MPLR…KSDS, MEID…ERVR, and EQDA…KKIE. Residues 8–18 are compositionally biased toward low complexity; that stretch reads ASSSASTASNR. The stretch at 276–524 forms a coiled coil; the sequence is AEHREQEKEQ…EDIKKQKLEE (249 aa). Positions 387–415 are enriched in basic and acidic residues; it reads DALRAKRNQEVADREWRRKEKENAQKKIE.

The protein belongs to the CFAP45 family. In terms of assembly, microtubule inner protein component of sperm flagellar doublet microtubules. Interacts with AK8; dimerization with AK8 may create a cavity at the interface of the dimer that can accommodate AMP. Interacts with CFAP52. Interacts with ENKUR. Directly interacts with DNALI1. Interacts with DNAH11. Interacts with DNAI1. In terms of tissue distribution, expressed in respiratory cells and in sperm (at protein level).

It localises to the cytoplasm. It is found in the cytoskeleton. The protein resides in the cilium axoneme. The protein localises to the flagellum axoneme. Its subcellular location is the cell projection. It localises to the cilium. It is found in the flagellum. Its function is as follows. Microtubule inner protein (MIP) part of the dynein-decorated doublet microtubules (DMTs) in cilia axoneme, which is required for motile cilia beating. It is an AMP-binding protein that may facilitate dynein ATPase-dependent ciliary and flagellar beating via adenine nucleotide homeostasis. May function as a donor of AMP to AK8 and hence promote ADP production. The sequence is that of Cilia- and flagella-associated protein 45 (Cfap45) from Mus musculus (Mouse).